We begin with the raw amino-acid sequence, 534 residues long: Ankyrin repeat and LEM domain-containing protein 1 (534 aa).

ANK repeat units follow at residues 4-35 (TACL…DPNL), 39-71 (DGAA…DPNA), 75-104 (EGLT…DPTL), and 108-137 (DGLR…PTQP). Positions 279-323 (HSSVPPMSDLQLLQALRALGYSPGPVTPFTRGHYLRRLQEAQASR) constitute an LEM domain. The GIY-YIG domain occupies 370–485 (KSSFTYLLLD…ALGLQTLTNQ (116 aa)). The Nuclear localization signal signature appears at 498-505 (PPSRRRRL).

Interacts (via LEM domain) with BANF1; the interaction may favor BANF1 dimerization. As to expression, predominantly expressed in bone marrow, spleen, thymus, colon and ovary. Expressed also to a lesser extent in lymph nodes, liver and testis.

The protein localises to the cytoplasm. It is found in the nucleus. Its function is as follows. Endonuclease that probably plays a role in the DNA damage response and DNA repair. This is Ankyrin repeat and LEM domain-containing protein 1 from Mus musculus (Mouse).